The primary structure comprises 139 residues: Large ribosomal subunit protein uL13 (139 aa).

The protein belongs to the universal ribosomal protein uL13 family. In terms of assembly, part of the 50S ribosomal subunit.

Its function is as follows. This protein is one of the early assembly proteins of the 50S ribosomal subunit, although it is not seen to bind rRNA by itself. It is important during the early stages of 50S assembly. The chain is Large ribosomal subunit protein uL13 from Aliarcobacter butzleri (strain RM4018) (Arcobacter butzleri).